Consider the following 224-residue polypeptide: Phosphoribosylformylglycinamidine synthase subunit PurQ (224 aa).

The region spanning 4–224 (RIGVITFPGT…YSALDSVLAS (221 aa)) is the Glutamine amidotransferase type-1 domain. The active-site Nucleophile is C87. Residues H195 and E197 contribute to the active site.

In terms of assembly, part of the FGAM synthase complex composed of 1 PurL, 1 PurQ and 2 PurS subunits.

Its subcellular location is the cytoplasm. The catalysed reaction is N(2)-formyl-N(1)-(5-phospho-beta-D-ribosyl)glycinamide + L-glutamine + ATP + H2O = 2-formamido-N(1)-(5-O-phospho-beta-D-ribosyl)acetamidine + L-glutamate + ADP + phosphate + H(+). It carries out the reaction L-glutamine + H2O = L-glutamate + NH4(+). The protein operates within purine metabolism; IMP biosynthesis via de novo pathway; 5-amino-1-(5-phospho-D-ribosyl)imidazole from N(2)-formyl-N(1)-(5-phospho-D-ribosyl)glycinamide: step 1/2. Functionally, part of the phosphoribosylformylglycinamidine synthase complex involved in the purines biosynthetic pathway. Catalyzes the ATP-dependent conversion of formylglycinamide ribonucleotide (FGAR) and glutamine to yield formylglycinamidine ribonucleotide (FGAM) and glutamate. The FGAM synthase complex is composed of three subunits. PurQ produces an ammonia molecule by converting glutamine to glutamate. PurL transfers the ammonia molecule to FGAR to form FGAM in an ATP-dependent manner. PurS interacts with PurQ and PurL and is thought to assist in the transfer of the ammonia molecule from PurQ to PurL. This Mycobacterium leprae (strain TN) protein is Phosphoribosylformylglycinamidine synthase subunit PurQ.